The chain runs to 105 residues: Large ribosomal subunit protein P2 (105 aa).

A disordered region spans residues 84-105; that stretch reads AEAKKEEPEEEADDDMGFGLFD.

Belongs to the eukaryotic ribosomal protein P1/P2 family. In terms of assembly, P1 and P2 exist as dimers at the large ribosomal subunit. In terms of processing, phosphorylated.

Functionally, plays an important role in the elongation step of protein synthesis. In Leishmania donovani, this protein is Large ribosomal subunit protein P2 (ARP-1).